We begin with the raw amino-acid sequence, 220 residues long: Inner membrane-spanning protein YciB (220 aa).

Helical transmembrane passes span 20 to 40 (EVPP…FFFA), 57 to 77 (IGAP…IALA), 86 to 106 (LPIM…LTLW), 123 to 143 (LFGG…GYVF), 156 to 176 (KLTL…EIVW), and 187 to 207 (FKVW…MPLI).

Belongs to the YciB family.

The protein resides in the cell inner membrane. Plays a role in cell envelope biogenesis, maintenance of cell envelope integrity and membrane homeostasis. The polypeptide is Inner membrane-spanning protein YciB (Brucella abortus (strain S19)).